The sequence spans 261 residues: Global transcriptional regulator CodY (261 aa).

The segment at 1-159 (MANLLDKTRK…ASTVVGLQLL (159 aa)) is GAF domain. A DNA-binding region (H-T-H motif) is located at residues 207 to 226 (ASVIADRIGITRSVIVNALR).

It belongs to the CodY family.

The protein resides in the cytoplasm. Functionally, DNA-binding global transcriptional regulator which is involved in the adaptive response to starvation and acts by directly or indirectly controlling the expression of numerous genes in response to nutrient availability. During rapid exponential growth, CodY is highly active and represses genes whose products allow adaptation to nutrient depletion. The sequence is that of Global transcriptional regulator CodY from Streptococcus thermophilus (strain CNRZ 1066).